We begin with the raw amino-acid sequence, 203 residues long: Probable Tat proofreading chaperone DmsD (203 aa).

The protein belongs to the TorD/DmsD family. DmsD subfamily.

Required for biogenesis/assembly of DMSO reductase, but not for the interaction of the DmsA signal peptide with the Tat system. May be part of a chaperone cascade complex that facilitates a folding-maturation pathway for the substrate protein. This Haemophilus influenzae (strain ATCC 51907 / DSM 11121 / KW20 / Rd) protein is Probable Tat proofreading chaperone DmsD.